Consider the following 819-residue polypeptide: Advillin (819 aa).

The segment at 1–731 (MSLSSAFRTV…YEQLKNELGD (731 aa)) is core. A Gelsolin-like 1 repeat occupies 24-105 (MELVLVPLSA…VQYHESDTFR (82 aa)). Residue Tyr85 is modified to Phosphotyrosine. A 1,2-diacyl-sn-glycero-3-phospho-(1D-myo-inositol-4,5-bisphosphate) contacts are provided by residues 109-116 (KRGIIYKK) and 135-143 (RLLHVKGKR). 5 Gelsolin-like repeats span residues 144–215 (NIRA…KEAA), 265–339 (TEVA…SAMF), 407–486 (LVPV…RHFM), 524–592 (NTKA…PEFW), and 631–704 (TEVT…PPTF). A required for interaction with F-actin region spans residues 628–819 (FLVTEVTDFT…LQLKKEAGLF (192 aa)). Positions 731–819 (DATAIVRITT…LQLKKEAGLF (89 aa)) are headpiece. The HP domain occupies 753-819 (ESGPKYYPVE…LQLKKEAGLF (67 aa)). A Phosphotyrosine modification is found at Tyr758.

It belongs to the villin/gelsolin family. As to quaternary structure, associates (via C-terminus) with actin. Interacts with F-actin. Interacts with SCARF1; the interaction occurs in embryonic dorsal root ganglions at 18 dpc and induces neurite-like outgrowth. Interacts with PLCE1. Interacts with ACTR2 and ACTR3; associates with the ARP2/3 complex. As to expression, expressed in dorsal root ganglion (DRG) neurons and superior cervical ganglia (SCG). Expressed in podocytes.

Its subcellular location is the cytoplasm. It localises to the cytoskeleton. It is found in the cell projection. The protein localises to the neuron projection. The protein resides in the axon. Its subcellular location is the lamellipodium. It localises to the cell junction. It is found in the focal adhesion. Ca(2+)-regulated actin-binding protein which plays an important role in actin bundling. May have a unique function in the morphogenesis of neuronal cells which form ganglia. Required for SREC1-mediated regulation of neurite-like outgrowth. Plays a role in regenerative sensory axon outgrowth and remodeling processes after peripheral injury in neonates. Involved in the formation of long fine actin-containing filopodia-like structures in fibroblast. Plays a role in ciliogenesis. In podocytes, controls lamellipodia formation through the regulation of EGF-induced diacylglycerol generation by PLCE1 and ARP2/3 complex assembly. This chain is Advillin, found in Rattus norvegicus (Rat).